Consider the following 118-residue polypeptide: Large ribosomal subunit protein bL19 (118 aa).

Belongs to the bacterial ribosomal protein bL19 family.

This protein is located at the 30S-50S ribosomal subunit interface and may play a role in the structure and function of the aminoacyl-tRNA binding site. This Geobacter sulfurreducens (strain ATCC 51573 / DSM 12127 / PCA) protein is Large ribosomal subunit protein bL19.